We begin with the raw amino-acid sequence, 237 residues long: Uridylate kinase (237 aa).

Position 11–14 (lysine 11–glycine 14) interacts with ATP. UMP is bound at residue glycine 53. Positions 54 and 58 each coordinate ATP. Residues aspartate 73 and threonine 134–threonine 141 each bind UMP. ATP is bound by residues threonine 161, tyrosine 167, and aspartate 170.

It belongs to the UMP kinase family. As to quaternary structure, homohexamer.

Its subcellular location is the cytoplasm. The catalysed reaction is UMP + ATP = UDP + ADP. Its pathway is pyrimidine metabolism; CTP biosynthesis via de novo pathway; UDP from UMP (UMPK route): step 1/1. Inhibited by UTP. Catalyzes the reversible phosphorylation of UMP to UDP. The protein is Uridylate kinase of Burkholderia vietnamiensis (strain G4 / LMG 22486) (Burkholderia cepacia (strain R1808)).